Reading from the N-terminus, the 212-residue chain is Protein GET1 (212 aa).

Residues 1–4 are Lumenal-facing; it reads MASL. A helical transmembrane segment spans residues 5–24; sequence LLFVLVIQIITYLINTIGAR. Over 25–110 the chain is Cytoplasmic; sequence TIDSLLWLLY…SFDWTIKTVR (86 aa). Residues 75–99 adopt a coiled-coil conformation; that stretch reads AKLRRRHDKAMEEYDVKNKKLSALK. A helical membrane pass occupies residues 111–131; that stretch reads WVSTTGVTVILQFWFSKSPIF. At 132-155 the chain is on the lumenal side; sequence DLPRGWLPWQVEWILSFPRAPLGT. Residues 156–172 form a helical membrane-spanning segment; it reads VSIQVWGGACGTVIALV. Residues 173–212 are Cytoplasmic-facing; the sequence is GGAMGVAAPAFKKINQPRGEAQKMGTPRGSREQTPVRKTQ. The tract at residues 189–212 is disordered; sequence PRGEAQKMGTPRGSREQTPVRKTQ. Basic and acidic residues predominate over residues 201-212; the sequence is GSREQTPVRKTQ.

It belongs to the WRB/GET1 family. As to quaternary structure, interacts with GET3.

The protein resides in the endoplasmic reticulum membrane. Its function is as follows. Required for the post-translational delivery of tail-anchored (TA) proteins to the endoplasmic reticulum. Acts as a membrane receptor for soluble GET3, which recognizes and selectively binds the transmembrane domain of TA proteins in the cytosol. The sequence is that of Protein GET1 from Arthroderma otae (strain ATCC MYA-4605 / CBS 113480) (Microsporum canis).